A 164-amino-acid chain; its full sequence is UPF0114 protein KPK_0696 (164 aa).

4 helical membrane-spanning segments follow: residues 15–35, 53–73, 109–126, and 136–156; these read LLAPVYFGLSLGLVALTIKFF, LILTLLSLVDMTLVGGLLVMV, VAASIVAISSIHLLRVFM, and LMWYVIIHLTFVLSAFVMGYL.

The protein belongs to the UPF0114 family.

Its subcellular location is the cell membrane. This chain is UPF0114 protein KPK_0696, found in Klebsiella pneumoniae (strain 342).